Reading from the N-terminus, the 414-residue chain is NFATC2-interacting protein (414 aa).

Positions 1-42 (MAEPLRRRGPRSRGGRASRGARRARAARGRCPRAPRSPTRLI) are disordered. Residues 7-33 (RRGPRSRGGRASRGARRARAARGRCPR) show a composition bias toward basic residues. A phosphoserine mark is found at Ser52 and Ser54. Residues 63 to 118 (ADPGEVPVARLPAPAAPEQDSDSDSEGAAEGPAGAPRTLVRRRRRLLDPGEAPVVP) form a disordered region. Over residues 68-79 (VPVARLPAPAAP) the composition is skewed to low complexity. A phosphoserine mark is found at Ser83, Ser85, and Ser87. Residues 90 to 100 (AAEGPAGAPRT) show a composition bias toward low complexity. Position 121 is a phosphoserine (Ser121). Lys123 is covalently cross-linked (Glycyl lysine isopeptide (Lys-Gly) (interchain with G-Cter in SUMO2)). Positions 139–208 (KLCPSEPEDE…SSRNKSRKHT (70 aa)) are disordered. The stretch at 170 to 229 (KKKLRKKHEKEEKKMEEFPDQDISPLPQPSSRNKSRKHTEALQKLREVNKRLQDLRSCLS) forms a coiled coil. Ser193, Ser199, and Ser309 each carry phosphoserine. Thr311 and Thr313 each carry phosphothreonine. The 72-residue stretch at 343 to 414 (LRLRVQGKEK…ESGDLIEVWG (72 aa)) folds into the Ubiquitin-like domain. Phosphoserine occurs at positions 364 and 385.

In terms of assembly, interacts with NFATC2, TRAF1, TRAF2 and PRMT1. Interacts with UBE2I/UBC9. Post-translationally, methylation at the N-terminus by PRMT1 modulates interaction with the NFAT complex and results in augmented cytokine production.

It is found in the nucleus. The protein resides in the cytoplasm. Functionally, in T-helper 2 (Th2) cells, regulates the magnitude of NFAT-driven transcription of a specific subset of cytokine genes, including IL3, IL4, IL5 and IL13, but not IL2. Recruits PRMT1 to the IL4 promoter; this leads to enhancement of histone H4 'Arg-3'-methylation and facilitates subsequent histone acetylation at the IL4 locus, thus promotes robust cytokine expression. Down-regulates formation of poly-SUMO chains by UBE2I/UBC9. In Rattus norvegicus (Rat), this protein is NFATC2-interacting protein (Nfatc2ip).